We begin with the raw amino-acid sequence, 142 residues long: Large ribosomal subunit protein mL42 (142 aa).

Residues 1 to 32 (MALAAVKWAISSRTMLKHLFPVENGALYCVGH) constitute a mitochondrion transit peptide.

The protein belongs to the mitochondrion-specific ribosomal protein mL42 family. In terms of assembly, component of the mitochondrial ribosome large subunit (39S) which comprises a 16S rRNA and about 50 distinct proteins. Component of the mitochondrial ribosome small subunit (28S) which comprises a 12S rRNA and about 30 distinct proteins.

Its subcellular location is the mitochondrion. In Bos taurus (Bovine), this protein is Large ribosomal subunit protein mL42 (MRPL42).